Consider the following 105-residue polypeptide: uncharacterized protein (105 aa).

Positions 1–27 (MSLKSWHPQSKTKRVGASEGNPQWGSG) are disordered.

This is an uncharacterized protein from Homo sapiens (Human).